The sequence spans 276 residues: Glutamate racemase (276 aa).

Substrate-binding positions include 9 to 10 (DS) and 41 to 42 (YG). Cys-72 (proton donor/acceptor) is an active-site residue. A substrate-binding site is contributed by 73–74 (NT). Residue Cys-183 is the Proton donor/acceptor of the active site. A substrate-binding site is contributed by 184–185 (TH).

Belongs to the aspartate/glutamate racemases family.

The catalysed reaction is L-glutamate = D-glutamate. It functions in the pathway cell wall biogenesis; peptidoglycan biosynthesis. Its function is as follows. Provides the (R)-glutamate required for cell wall biosynthesis. In Shouchella clausii (strain KSM-K16) (Alkalihalobacillus clausii), this protein is Glutamate racemase.